Consider the following 445-residue polypeptide: Phosphoglucosamine mutase (445 aa).

Ser-102 acts as the Phosphoserine intermediate in catalysis. The Mg(2+) site is built by Ser-102, Asp-241, Asp-243, and Asp-245. Ser-102 is modified (phosphoserine).

Belongs to the phosphohexose mutase family. It depends on Mg(2+) as a cofactor. Post-translationally, activated by phosphorylation.

The enzyme catalyses alpha-D-glucosamine 1-phosphate = D-glucosamine 6-phosphate. In terms of biological role, catalyzes the conversion of glucosamine-6-phosphate to glucosamine-1-phosphate. The chain is Phosphoglucosamine mutase from Shigella flexneri serotype 5b (strain 8401).